The primary structure comprises 504 residues: Tachykinin-like peptides receptor 86C (504 aa).

At 1-84 (MSEIVDTELL…PYELPWEQKT (84 aa)) the chain is on the extracellular side. Residues asparagine 12, asparagine 28, and asparagine 36 are each glycosylated (N-linked (GlcNAc...) asparagine). The helical transmembrane segment at 85 to 108 (IWAIIFGLMMFVAIAGNGIVLWIV) threads the bilayer. The Cytoplasmic portion of the chain corresponds to 109–118 (TGHRSMRTVT). Residues 119–143 (NYFLLNLSIADLLMSSLNCVFNFIF) form a helical membrane-spanning segment. Topologically, residues 144 to 155 (MLNSDWPFGSIY) are extracellular. The helical transmembrane segment at 156 to 179 (CTINNFVANVTVSTSVFTLVAISF) threads the bilayer. Residues 180–199 (DRYIAIVHPLKRRTSRRKVR) are Cytoplasmic-facing. A helical membrane pass occupies residues 200–224 (IILVLIWALSCVLSAPCLLYSSIMT). The Extracellular portion of the chain corresponds to 225–250 (KHYYNGKSRTVCFMMWPDGRYPTSMA). The helical transmembrane segment at 251-275 (DYAYNLIILVLTYGIPMIVMLICYS) threads the bilayer. At 276-308 (LMGRVLWGSRSIGENTDRQMESMKSKRKVVRMF) the chain is on the cytoplasmic side. The chain crosses the membrane as a helical span at residues 309-330 (IAIVSIFAICWLPYHLFFIYAY). Residues 331 to 343 (HNNQVASTKYVQH) are Extracellular-facing. The chain crosses the membrane as a helical span at residues 344–367 (MYLGFYWLAMSNAMVNPLIYYWMN). The Cytoplasmic segment spans residues 368–504 (KRFRMYFQRI…NPVELSPKQM (137 aa)). The disordered stretch occupies residues 393-450 (PKSRLTNKNSSNRHTRAETKSQWKRSTMETQIQQAPVTSSCREQRSAQQQQPPGSGTN). 2 stretches are compositionally biased toward polar residues: residues 395–404 (SRLTNKNSSN) and 416–450 (KRST…SGTN).

The protein belongs to the G-protein coupled receptor 1 family. Expressed in central nervous system, as well as in subsets of neurons in each segment of the developing ventral ganglia.

The protein resides in the cell membrane. Its function is as follows. Receptor for tachykinin-like peptides. This Drosophila melanogaster (Fruit fly) protein is Tachykinin-like peptides receptor 86C (TkR86C).